The chain runs to 197 residues: Peptidyl-tRNA hydrolase (197 aa).

Tyr-21 is a tRNA binding site. The Proton acceptor role is filled by His-26. Residues Tyr-72, Asn-74, and Asn-120 each coordinate tRNA.

The protein belongs to the PTH family. As to quaternary structure, monomer.

The protein resides in the cytoplasm. The enzyme catalyses an N-acyl-L-alpha-aminoacyl-tRNA + H2O = an N-acyl-L-amino acid + a tRNA + H(+). In terms of biological role, hydrolyzes ribosome-free peptidyl-tRNAs (with 1 or more amino acids incorporated), which drop off the ribosome during protein synthesis, or as a result of ribosome stalling. Functionally, catalyzes the release of premature peptidyl moieties from peptidyl-tRNA molecules trapped in stalled 50S ribosomal subunits, and thus maintains levels of free tRNAs and 50S ribosomes. In Alkalilimnicola ehrlichii (strain ATCC BAA-1101 / DSM 17681 / MLHE-1), this protein is Peptidyl-tRNA hydrolase.